A 93-amino-acid polypeptide reads, in one-letter code: Phosphoribosyl-ATP pyrophosphatase (93 aa).

It belongs to the PRA-PH family.

It localises to the cytoplasm. It catalyses the reaction 1-(5-phospho-beta-D-ribosyl)-ATP + H2O = 1-(5-phospho-beta-D-ribosyl)-5'-AMP + diphosphate + H(+). The protein operates within amino-acid biosynthesis; L-histidine biosynthesis; L-histidine from 5-phospho-alpha-D-ribose 1-diphosphate: step 2/9. This Rhodococcus jostii (strain RHA1) protein is Phosphoribosyl-ATP pyrophosphatase.